The primary structure comprises 197 residues: ATP-dependent Clp protease proteolytic subunit (197 aa).

Ser-98 functions as the Nucleophile in the catalytic mechanism. The active site involves His-123.

Belongs to the peptidase S14 family. In terms of assembly, fourteen ClpP subunits assemble into 2 heptameric rings which stack back to back to give a disk-like structure with a central cavity, resembling the structure of eukaryotic proteasomes.

The protein resides in the cytoplasm. It carries out the reaction Hydrolysis of proteins to small peptides in the presence of ATP and magnesium. alpha-casein is the usual test substrate. In the absence of ATP, only oligopeptides shorter than five residues are hydrolyzed (such as succinyl-Leu-Tyr-|-NHMec, and Leu-Tyr-Leu-|-Tyr-Trp, in which cleavage of the -Tyr-|-Leu- and -Tyr-|-Trp bonds also occurs).. Cleaves peptides in various proteins in a process that requires ATP hydrolysis. Has a chymotrypsin-like activity. Plays a major role in the degradation of misfolded proteins. The sequence is that of ATP-dependent Clp protease proteolytic subunit from Natranaerobius thermophilus (strain ATCC BAA-1301 / DSM 18059 / JW/NM-WN-LF).